Consider the following 484-residue polypeptide: GTPase Obg (484 aa).

Positions 7-164 (PRFVDRVVIH…RDLTLELKTV (158 aa)) constitute an Obg domain. The interval 21 to 43 (SGGNGCASVHREKFKPLGGPDGG) is disordered. Residues 165 to 345 (ADVGLVGFPS…LIFGLSQMIS (181 aa)) enclose the OBG-type G domain. Residues 171–178 (GFPSAGKS), 196–200 (FTTLV), 217–220 (DVPG), 297–300 (NKID), and 326–328 (STA) each bind GTP. Positions 178 and 198 each coordinate Mg(2+). The 79-residue stretch at 363 to 441 (PIPVDDSGFT…IGEMTFDWEP (79 aa)) folds into the OCT domain. Residues 439 to 484 (WEPQTPAGEPVAMSGRGTDPRLDSNKRVGAAERKAARSRRREHGDG) are disordered. Residues 456–473 (TDPRLDSNKRVGAAERKA) are compositionally biased toward basic and acidic residues. Over residues 474-484 (ARSRRREHGDG) the composition is skewed to basic residues.

This sequence belongs to the TRAFAC class OBG-HflX-like GTPase superfamily. OBG GTPase family. Monomer. Mg(2+) serves as cofactor.

It is found in the cytoplasm. Its function is as follows. An essential GTPase which binds GTP, GDP and possibly (p)ppGpp with moderate affinity, with high nucleotide exchange rates and a fairly low GTP hydrolysis rate. Plays a role in control of the cell cycle, stress response, ribosome biogenesis and in those bacteria that undergo differentiation, in morphogenesis control. The polypeptide is GTPase Obg (Mycobacterium tuberculosis (strain CDC 1551 / Oshkosh)).